The primary structure comprises 351 residues: C(7)-cyclitol 7-kinase (351 aa).

This sequence belongs to the ROK (NagC/XylR) family.

The enzyme catalyses valienone + ATP = valienone 7-phosphate + ADP + H(+). It carries out the reaction validone + ATP = validone 7-phosphate + ADP + H(+). Involved in the biosynthesis of the antifungal agent validamycin A. Catalyzes the phosphorylation of valienone and validone to their 7-phosphate derivatives. In Streptomyces hygroscopicus subsp. jinggangensis (strain 5008), this protein is C(7)-cyclitol 7-kinase.